Consider the following 408-residue polypeptide: Ubiquitin-associated domain-containing protein 1 (408 aa).

A Ubiquitin-like domain is found at 14-98; the sequence is LRLQVCTMEG…LLLIKKRAPP (85 aa). Positions 100-119 are disordered; that stretch reads LPKMADVSAEEKRKQEQKAP. Basic and acidic residues predominate over residues 108 to 119; the sequence is AEEKRKQEQKAP. One can recognise a UBA 1 domain in the interval 185-231; sequence DEDEEDRVDEIALRQLTEMGFPESRAVKALRLNHMSVTQAMEWLIEH. A disordered region spans residues 235-275; that stretch reads PAVDAPLPGQTPSEAAAEAGASSAEATAGPSSEAGGEEAKD. Low complexity predominate over residues 245–268; sequence TPSEAAAEAGASSAEATAGPSSEA. One can recognise a UBA 2 domain in the interval 291–331; sequence RPDPRAVIALMEMGFDEKEVVDALRVNNNQQNAACEWLLGD. The STI1 domain occupies 356-395; it reads NPVVQLGLTNPKTLLAFEDMLENPLNSTQWMNDPETGPVM.

Component of the KPC complex.

The protein localises to the cytoplasm. It functions in the pathway protein modification; protein ubiquitination. Functionally, non-catalytic component of the KPC complex, a E3 ubiquitin-protein ligase complex that mediates polyubiquitination of target proteins, such as CDKN1B and NFKB1. Within the KPC complex, UBAC1 acts as an adapter that promotes the transfer of target proteins that have been polyubiquitinated by RNF123/KPC1 to the 26S proteasome. The protein is Ubiquitin-associated domain-containing protein 1 (UBAC1) of Gallus gallus (Chicken).